A 455-amino-acid polypeptide reads, in one-letter code: 5'-nucleotidase domain-containing protein 1 (455 aa).

Residue Asp16 is the Nucleophile of the active site. Positions 16 and 18 each coordinate Mg(2+). The active-site Proton donor is Asp18. Lys171 is subject to N6-acetyllysine. Asp313 lines the Mg(2+) pocket. Positions 339 to 364 (GDEGTRSQRPEESEPLEKKGKYEGPK) are enriched in basic and acidic residues. The disordered stretch occupies residues 339 to 368 (GDEGTRSQRPEESEPLEKKGKYEGPKAKPL).

Belongs to the 5'(3')-deoxyribonucleotidase family.

The protein is 5'-nucleotidase domain-containing protein 1 (NT5DC1) of Homo sapiens (Human).